The chain runs to 508 residues: Maturase K (508 aa).

The protein belongs to the intron maturase 2 family. MatK subfamily.

It localises to the plastid. It is found in the chloroplast. Usually encoded in the trnK tRNA gene intron. Probably assists in splicing its own and other chloroplast group II introns. The chain is Maturase K from Coronilla varia (Crown vetch).